A 550-amino-acid chain; its full sequence is Urocanate hydratase (550 aa).

Residues 48–49 (GG), Gln-126, 172–174 (GMG), Glu-192, Arg-197, 238–239 (NA), 259–263 (QTSAH), 268–269 (YL), and Tyr-317 contribute to the NAD(+) site. Residue Cys-405 is part of the active site. Gly-487 is a binding site for NAD(+).

It belongs to the urocanase family. NAD(+) is required as a cofactor.

The protein localises to the cytoplasm. It catalyses the reaction 4-imidazolone-5-propanoate = trans-urocanate + H2O. Its pathway is amino-acid degradation; L-histidine degradation into L-glutamate; N-formimidoyl-L-glutamate from L-histidine: step 2/3. Its function is as follows. Catalyzes the conversion of urocanate to 4-imidazolone-5-propionate. The sequence is that of Urocanate hydratase from Saccharopolyspora erythraea (strain ATCC 11635 / DSM 40517 / JCM 4748 / NBRC 13426 / NCIMB 8594 / NRRL 2338).